Here is a 146-residue protein sequence, read N- to C-terminus: Cytochrome b5 type B (146 aa).

Positions 1-11 (MATPEASGSGE) are excised as a propeptide. Residue S19 is modified to Phosphoserine. The Cytochrome b5 heme-binding domain maps to 20-96 (VTYYRLEEVA…LKQYYIGDVH (77 aa)). K30 carries the post-translational modification N6-acetyllysine. S33 bears the Phosphoserine mark. Heme is bound by residues H55 and H79. Position 80 is a phosphoserine (S80). The chain crosses the membrane as a helical span at residues 119-136 (WAYWFVPIVGAILIGFLY).

It belongs to the cytochrome b5 family. As to quaternary structure, component of a complex composed of cytochrome b5, NADH-cytochrome b5 reductase (CYB5R3) and MTARC2.

The protein resides in the mitochondrion outer membrane. Functionally, cytochrome b5 is a membrane-bound hemoprotein functioning as an electron carrier for several membrane-bound oxygenases. In Mus musculus (Mouse), this protein is Cytochrome b5 type B (Cyb5b).